The chain runs to 558 residues: Potassium-transporting ATPase potassium-binding subunit (558 aa).

11 consecutive transmembrane segments (helical) span residues 1 to 21, 59 to 79, 85 to 105, 130 to 150, 179 to 199, 245 to 265, 279 to 299, 374 to 394, 416 to 436, 484 to 504, and 527 to 547; these read MDTL…VLIH, PAYL…VYGL, FLPY…NTAV, GLAV…IALV, LSLV…FAGF, PTAW…FSLP, TAIV…LTIF, GLYG…LLVG, ILVT…IPAV, ALGV…LALA, and FVGL…FPVL.

Belongs to the KdpA family. In terms of assembly, the system is composed of three essential subunits: KdpA, KdpB and KdpC.

Its subcellular location is the cell membrane. Its function is as follows. Part of the high-affinity ATP-driven potassium transport (or Kdp) system, which catalyzes the hydrolysis of ATP coupled with the electrogenic transport of potassium into the cytoplasm. This subunit binds the extracellular potassium ions and delivers the ions to the membrane domain of KdpB through an intramembrane tunnel. The polypeptide is Potassium-transporting ATPase potassium-binding subunit (Clavibacter michiganensis subsp. michiganensis (strain NCPPB 382)).